The following is a 375-amino-acid chain: Succinyl-diaminopimelate desuccinylase (375 aa).

His-66 contributes to the Zn(2+) binding site. The active site involves Asp-68. Position 99 (Asp-99) interacts with Zn(2+). Glu-133 serves as the catalytic Proton acceptor. Zn(2+) is bound by residues Glu-134, Glu-162, and His-348.

The protein belongs to the peptidase M20A family. DapE subfamily. Homodimer. Zn(2+) is required as a cofactor. Requires Co(2+) as cofactor.

It carries out the reaction N-succinyl-(2S,6S)-2,6-diaminopimelate + H2O = (2S,6S)-2,6-diaminopimelate + succinate. It functions in the pathway amino-acid biosynthesis; L-lysine biosynthesis via DAP pathway; LL-2,6-diaminopimelate from (S)-tetrahydrodipicolinate (succinylase route): step 3/3. Its function is as follows. Catalyzes the hydrolysis of N-succinyl-L,L-diaminopimelic acid (SDAP), forming succinate and LL-2,6-diaminopimelate (DAP), an intermediate involved in the bacterial biosynthesis of lysine and meso-diaminopimelic acid, an essential component of bacterial cell walls. In Photorhabdus laumondii subsp. laumondii (strain DSM 15139 / CIP 105565 / TT01) (Photorhabdus luminescens subsp. laumondii), this protein is Succinyl-diaminopimelate desuccinylase.